The primary structure comprises 551 residues: Cytochrome c oxidase subunit 1 (551 aa).

Residues 34–54 form a helical membrane-spanning segment; that stretch reads TLYLYSGVWGGLFGASLSLMI. Gly-62 contacts Ca(2+). A Fe(II)-heme a-binding site is contributed by His-79. The next 6 helical transmembrane spans lie at 81 to 101, 126 to 146, 163 to 183, 209 to 229, 252 to 272, and 285 to 305; these read LMMIFFAVMPILIEAFGNWLI, ALYLLMLSFSTDKGVGAGWTI, VLIVSLHLAGLSSLVGAINFA, TAVLLIISIPVLGGGITMILF, LFWFFGHPEVYILILPAFGVM, and VFGLIGMVYAMIGIGGLGCMV. His-258 is a Cu cation binding site. The 1'-histidyl-3'-tyrosine (His-Tyr) cross-link spans 258–262; the sequence is HPEVY. Tyr-262 provides a ligand contact to O2. Residues His-308 and His-309 each coordinate Cu cation. The next 2 membrane-spanning stretches (helical) occupy residues 326-346 and 356-376; these read ATMVIAVPTGVKVFSWLATMA and AYWSTGFLFLFTVGGLTGVLL. 2 residues coordinate Mg(2+): His-386 and Asp-387. Helical transmembrane passes span 391 to 411, 432 to 452, and 475 to 495; these read VVAHFHYVLSMGAVFGVFCGL, FMAMFFGVNTTFFPQHFLGLS, and GSAVSFGSLMYFKFLLWEALV. His-394 is a binding site for heme a3. Position 396 (His-396) interacts with Fe(II)-heme a.

The protein belongs to the heme-copper respiratory oxidase family. Component of the cytochrome c oxidase (complex IV, CIV), a multisubunit enzyme composed of a catalytic core of 3 subunits and several supernumerary subunits. The complex exists as a monomer or a dimer and forms supercomplexes (SCs) in the inner mitochondrial membrane with ubiquinol-cytochrome c oxidoreductase (cytochrome b-c1 complex, complex III, CIII). Requires heme as cofactor. Cu cation is required as a cofactor.

It is found in the mitochondrion inner membrane. It catalyses the reaction 4 Fe(II)-[cytochrome c] + O2 + 8 H(+)(in) = 4 Fe(III)-[cytochrome c] + 2 H2O + 4 H(+)(out). It participates in energy metabolism; oxidative phosphorylation. Functionally, component of the cytochrome c oxidase, the last enzyme in the mitochondrial electron transport chain which drives oxidative phosphorylation. The respiratory chain contains 3 multisubunit complexes succinate dehydrogenase (complex II, CII), ubiquinol-cytochrome c oxidoreductase (cytochrome b-c1 complex, complex III, CIII) and cytochrome c oxidase (complex IV, CIV), that cooperate to transfer electrons derived from NADH and succinate to molecular oxygen, creating an electrochemical gradient over the inner membrane that drives transmembrane transport and the ATP synthase. Cytochrome c oxidase is the component of the respiratory chain that catalyzes the reduction of oxygen to water. Electrons originating from reduced cytochrome c in the intermembrane space (IMS) are transferred via the dinuclear copper A center (CU(A)) of subunit 2 and heme A of subunit 1 to the active site in subunit 1, a binuclear center (BNC) formed by heme A3 and copper B (CU(B)). The BNC reduces molecular oxygen to 2 water molecules using 4 electrons from cytochrome c in the IMS and 4 protons from the mitochondrial matrix. The protein is Cytochrome c oxidase subunit 1 (COI) of Mytilus edulis (Blue mussel).